The following is a 139-amino-acid chain: Putative pre-16S rRNA nuclease (139 aa).

The protein belongs to the YqgF nuclease family.

It is found in the cytoplasm. Its function is as follows. Could be a nuclease involved in processing of the 5'-end of pre-16S rRNA. This is Putative pre-16S rRNA nuclease from Pectobacterium atrosepticum (strain SCRI 1043 / ATCC BAA-672) (Erwinia carotovora subsp. atroseptica).